The primary structure comprises 143 residues: Transcription antitermination protein NusB (143 aa).

The protein belongs to the NusB family.

Functionally, involved in transcription antitermination. Required for transcription of ribosomal RNA (rRNA) genes. Binds specifically to the boxA antiterminator sequence of the ribosomal RNA (rrn) operons. The polypeptide is Transcription antitermination protein NusB (Mannheimia succiniciproducens (strain KCTC 0769BP / MBEL55E)).